The following is a 92-amino-acid chain: Acyl carrier protein (92 aa).

A Carrier domain is found at 1-84 (MPSTADERQL…QIAAHLAEAV (84 aa)). The residue at position 44 (Ser44) is an O-(pantetheine 4'-phosphoryl)serine.

The protein belongs to the acyl carrier protein (ACP) family. In terms of processing, 4'-phosphopantetheine is transferred from CoA to a specific serine of apo-ACP by AcpS. This modification is essential for activity because fatty acids are bound in thioester linkage to the sulfhydryl of the prosthetic group.

The protein resides in the cytoplasm. Its pathway is lipid metabolism; fatty acid biosynthesis. Functionally, carrier of the growing fatty acid chain in fatty acid biosynthesis. In Streptomyces coelicolor (strain ATCC BAA-471 / A3(2) / M145), this protein is Acyl carrier protein.